Here is a 543-residue protein sequence, read N- to C-terminus: Protein phosphatase 1G (543 aa).

Gly-2 carries N-myristoyl glycine lipidation. Position 22 is an omega-N-methylarginine (Arg-22). The 478-residue stretch at 26-503 (PYGFSAMQGW…DNMTCIIICF (478 aa)) folds into the PPM-type phosphatase domain. Mn(2+) contacts are provided by Asp-60 and Gly-61. 2 disordered regions span residues 116 to 139 (QIAG…DVDN) and 163 to 326 (NCHK…SDSG). Thr-122 is modified (phosphothreonine). The span at 123 to 139 (EDEDEKEKVADEDDVDN) shows a compositional bias: acidic residues. Phosphoserine is present on Ser-183. The span at 259 to 310 (DSEDESDEAEEEEEDSEECSEEEDGYSSEEAENEEDEDDTEEAEEDDEEEEM) shows a compositional bias: acidic residues. Residue Lys-381 is modified to N6-acetyllysine. Residues Asp-439 and Asp-494 each contribute to the Mn(2+) site. Residues 508–543 (TAAPQPESGKRKLEEVLSTEGAEENGNSDKKKAKRD) form a disordered region. Position 525 is a phosphoserine (Ser-525).

The protein belongs to the PP2C family. Interacts with NOL3; may dephosphorylate NOL3. Requires Mg(2+) as cofactor. The cofactor is Mn(2+).

It is found in the cytoplasm. Its subcellular location is the membrane. It carries out the reaction O-phospho-L-seryl-[protein] + H2O = L-seryl-[protein] + phosphate. It catalyses the reaction O-phospho-L-threonyl-[protein] + H2O = L-threonyl-[protein] + phosphate. In Bos taurus (Bovine), this protein is Protein phosphatase 1G (PPM1G).